Consider the following 1098-residue polypeptide: MAERGGDGGESERFNPGELRMAQQQALRFRGPAPPPNAVMRGPPPLMRPPPPFGMMRGPPPPPRPPFGRPPFDPNMPPMPPPGGIPPPMGPPHLQRPPFMPPPMSSMPPPPGMMFPPGMPPVTAPGTPALPPTEEIWVENKTPDGKVYYYNARTRESAWTKPDGVKVIQQSELTPMLAAQAQVQAQAQAQAQAQAQAQAQAQAQAQAQAQAQAQAQAQAQAQAQAQAQAQAQAQAQAQAQAQVQAQVQAQVQAQAVGASTPTTSSPAPAVSTSTSSSTPSSTTSTTTTATSVAQTVSTPTTQDQTPSSAVSVATPTVSVSTPAPTATPVQTVPQPHPQTLPPAVPHSVPQPTTAIPAFPPVMVPPFRVPLPGMPIPLPGVAMMQIVSCPYVKTVATTKTGVLPGMAPPIVPMIHPQVAIAASPATLAGATAVSEWTEYKTADGKTYYYNNRTLESTWEKPQELKEKEKLEEKIKEPIKEPSEEPLPMETEEEDPKEEPIKEIKEEPKEEEMTEEEKAAQKAKPVATAPIPGTPWCVVWTGDERVFFYNPTTRLSMWDRPDDLIGRADVDKIIQEPPHKKGMEELKKLRHPTPTMLSIQKWQFSMSAIKEEQELMEEINEDEPVKAKKRKRDDNKDIDSEKEAAMEAEIKAARERAIVPLEARMKQFKDMLLERGVSAFSTWEKELHKIVFDPRYLLLNPKERKQVFDQYVKTRAEEERREKKNKIMQAKEDFKKMMEEAKFNPRATFSEFAAKHAKDSRFKAIEKMKDREALFNEFVAAARKKEKEDSKTRGEKIKSDFFELLSNHHLDSQSRWSKVKDKVESDPRYKAVDSSSMREDLFKQYIEKIAKNLDSEKEKELERQARIEASLREREREVQKARSEQTKEIDREREQHKREEAIQNFKALLSDMVRSSDVSWSDTRRTLRKDHRWESGSLLEREEKEKLFNEHIEALTKKKREHFRQLLDETSAITLTSTWKEVKKIIKEDPRCIKFSSSDRKKQREFEEYIRDKYITAKADFRTLLKETKFITYRSKKLIQESDQHLKDVEKILQNDKRYLVLDCVPEERRKLIVAYVDDLDRRGPPPPPTASEPTRRSTK.

Over residues 1-15 the composition is skewed to basic and acidic residues; it reads MAERGGDGGESERFN. A disordered region spans residues 1-105; sequence MAERGGDGGE…RPPFMPPPMS (105 aa). S11 carries the post-translational modification Phosphoserine. R20 carries the post-translational modification Omega-N-methylarginine. Residues R28, R30, R41, and R48 each carry the asymmetric dimethylarginine modification. A compositionally biased stretch (pro residues) spans 32 to 105; the sequence is PAPPPNAVMR…RPPFMPPPMS (74 aa). The WW 1 domain maps to 131 to 164; it reads PPTEEIWVENKTPDGKVYYYNARTRESAWTKPDG. Residues 184-244 are a coiled coil; sequence QAQAQAQAQA…AQAQAQAQVQ (61 aa). Residues 259–333 show a composition bias toward low complexity; the sequence is STPTTSSPAP…PTATPVQTVP (75 aa). The tract at residues 259 to 348 is disordered; it reads STPTTSSPAP…TLPPAVPHSV (90 aa). Residues 334-344 show a composition bias toward pro residues; it reads QPHPQTLPPAV. The WW 2 domain occupies 429–462; it reads ATAVSEWTEYKTADGKTYYYNNRTLESTWEKPQE. 2 stretches are compositionally biased toward basic and acidic residues: residues 469–481 and 496–506; these read LEEK…KEPS and EEPIKEIKEEP. Positions 469–526 are disordered; sequence LEEKIKEPIKEPSEEPLPMETEEEDPKEEPIKEIKEEPKEEEMTEEEKAAQKAKPVAT. Residues K503 and K507 each participate in a glycyl lysine isopeptide (Lys-Gly) (interchain with G-Cter in SUMO2) cross-link. One can recognise a WW 3 domain in the interval 528–561; it reads PIPGTPWCVVWTGDERVFFYNPTTRLSMWDRPDD. The stretch at 606–655 forms a coiled coil; it reads AIKEEQELMEEINEDEPVKAKKRKRDDNKDIDSEKEAAMEAEIKAARERA. Residue K608 forms a Glycyl lysine isopeptide (Lys-Gly) (interchain with G-Cter in SUMO2) linkage. Residues 615-640 are disordered; that stretch reads EEINEDEPVKAKKRKRDDNKDIDSEK. The Nuclear localization signal motif lies at 626–630; the sequence is KKRKR. Positions 630–640 are enriched in basic and acidic residues; that stretch reads RDDNKDIDSEK. The residue at position 638 (S638) is a Phosphoserine. 3 consecutive FF domains span residues 659–712, 725–779, and 791–846; these read LEAR…YVKT, IMQA…FVAA, and RGEK…YIEK. S834 is modified (phosphoserine). Positions 844–906 form a coiled coil; sequence IEKIAKNLDS…EEAIQNFKAL (63 aa). Positions 870 to 895 are disordered; sequence REREREVQKARSEQTKEIDREREQHK. 3 consecutive FF domains span residues 896–952, 954–1010, and 1012–1077; these read REEA…HIEA, TKKK…YIRD, and YITA…YVDD. S933 carries the post-translational modification Phosphoserine. A disordered region spans residues 1076 to 1098; it reads DDLDRRGPPPPPTASEPTRRSTK.

As to quaternary structure, binds formin. Interacts (via the second WW domain) with TREX1 (via proline-rich region). Binds RNA polymerase II, HD and SF1. Detected in brain neurons.

It localises to the nucleus. Functionally, transcription factor that binds RNA polymerase II and inhibits the elongation of transcripts from target promoters. Regulates transcription elongation in a TATA box-dependent manner. Necessary for TAT-dependent activation of the human immunodeficiency virus type 1 (HIV-1) promoter. In Homo sapiens (Human), this protein is Transcription elongation regulator 1 (TCERG1).